The chain runs to 144 residues: Glycine-rich protein HC1 (144 aa).

A helical transmembrane segment spans residues 5–25 (IFLLLGLSIAFAILISSEVAA). 11 consecutive repeat copies span residues 37 to 42 (GYNNGG), 43 to 48 (GYHNGG), 50 to 55 (GYNNGG), 56 to 61 (GYHNGG), 63 to 68 (GYNNGG), 69 to 74 (GYHNGG), 76 to 81 (GYNNGG), 82 to 87 (GYHNGG), 89 to 94 (GYNNGG), 102 to 107 (GYNNGG), and 108 to 113 (GYHGGG). The interval 37–113 (GYNNGGGYHN…NNGGGYHGGG (77 aa)) is 11 X 6 AA tandem repeats of G-Y-[NH]-N-G -G.

Belongs to the GRP family.

It localises to the membrane. This is Glycine-rich protein HC1 from Oxybasis rubra (Red goosefoot).